The following is a 151-amino-acid chain: UPF0208 membrane protein YfbV (151 aa).

Topologically, residues 1–45 are cytoplasmic; it reads MSTPDNRSVNFFSLFRRGQHYAKTWPMEKRLAPVFVENRVIRMTR. The chain crosses the membrane as a helical span at residues 46 to 65; the sequence is YAIRFMPPVAVFTLCWQIAL. Residues 66–68 lie on the Periplasmic side of the membrane; sequence GGQ. A helical transmembrane segment spans residues 69 to 91; sequence LGPAVATALFALSLPMQGLWWLG. The Cytoplasmic segment spans residues 92-151; the sequence is KRSLTPLPPSILNWFYEVRGKLQEAGQALAPVEGKPDYQALADTLKRAFKQLDKTFLDDL.

The protein belongs to the UPF0208 family.

It is found in the cell inner membrane. The polypeptide is UPF0208 membrane protein YfbV (yfbV) (Salmonella typhi).